The chain runs to 514 residues: MPDHIYSHSFAQFLRNADNSVVNINPYPYVAFEDVFDDTFLRECLKELKSYLTAHFKETDLFKVFQTTDLANLEDCIRDAHTNVPNLIRLREHLYSPGFRGFVSTVTGTGPLDGAVDCSCNIYTSGCHLLCHDDVIGTRKISYIIYLSDPDCDWLAVDGGQLELYASDRRTVPTHTPVVSILPSWNSMVMFEVSPGRSFHAVREVSAEMKTRVSISGWFHTKERHIKRNQRETSTLDQLHSMIPATHAEWAVLHVNRVLSPSYSLVQDLTKWINPEYLRSESVKRVRQVFEADGSVQLFNFLLPHIAEPIKRKLNREDCRNSRHRCMYDHGYGDSWVVQGPPHVQRYLSYQPLECTLANKRSNSGELLKKLMCDLFESSSFQNWVRAVTGSVCDLAHSEVRRFRPGFDYTLAHAGTKRCSSEIDVTLCLTSGPNPAEWLSGDLGGFKCFIPIGSKSDRADVYEEIGEEQNMRSVTPSFNCLSLVKVNTGIGDFVKYVSTSAKSSRWDIVCRYST.

The 108-residue stretch at 114 to 221 folds into the Fe2OG dioxygenase domain; that stretch reads GAVDCSCNIY…RVSISGWFHT (108 aa). Fe cation-binding residues include H132 and D134. 2-oxoglutarate is bound at residue Y146. A Fe cation-binding site is contributed by H200. R212 lines the 2-oxoglutarate pocket.

It belongs to the TPA1 family. Monomer and homodimer. Fe(2+) serves as cofactor. L-ascorbate is required as a cofactor.

The enzyme catalyses [ribosomal protein uS12]-L-proline + 2-oxoglutarate + O2 = [ribosomal protein uS12]-(3S)-3-hydroxy-L-proline + succinate + CO2. The catalysed reaction is [ribosomal protein uS12]-(3S)-3-hydroxy-L-proline + 2-oxoglutarate + O2 = [ribosomal protein uS12]-(3S)-3,4-dihydroxy-L-proline + succinate + CO2. Functionally, prolyl 3,4-dihydroxylase that catalyzes 3,4-dihydroxylation of 'Pro-61' of small ribosomal subunit uS12 (RPS23), thereby regulating protein translation termination efficiency. This Ostreococcus tauri protein is Prolyl 3,4-dihydroxylase OGFOD1 (Ogd).